The following is a 50-amino-acid chain: MGKKSKASKKRLAKLERQNSRVPAWVMMKTNRDVQRNPKRRNWRRNDTDE.

Residues 1-12 show a composition bias toward basic residues; sequence MGKKSKASKKRL. 2 disordered regions span residues 1 to 20 and 30 to 50; these read MGKK…RQNS and TNRD…DTDE.

This sequence belongs to the eukaryotic ribosomal protein eL39 family.

This is Large ribosomal subunit protein eL39 (rpl39e) from Halobacterium salinarum (strain ATCC 700922 / JCM 11081 / NRC-1) (Halobacterium halobium).